A 527-amino-acid polypeptide reads, in one-letter code: Amine oxidase [flavin-containing] A (527 aa).

Position 1 is an N-acetylmethionine (Met1). The Cytoplasmic segment spans residues 1-497; it reads MASQEKASMA…HSFWERNLPS (497 aa). Ser383 is modified (phosphoserine). S-8alpha-FAD cysteine is present on Cys406. Residues 498 to 518 traverse the membrane as a helical; Anchor for type IV membrane protein segment; it reads VGGLLKIIGFSTSITALWIVV. At 519-527 the chain is on the mitochondrial intermembrane side; that stretch reads YKFKLLTRS. The interval 520 to 522 is interaction with membrane phospholipid headgroups; it reads KFK.

The protein belongs to the flavin monoamine oxidase family. In terms of assembly, monomer, homo- or heterodimer (containing two subunits of similar size). Each subunit contains a covalently bound flavin. Enzymatically active as monomer. FAD is required as a cofactor.

The protein localises to the mitochondrion outer membrane. It catalyses the reaction a secondary aliphatic amine + O2 + H2O = a primary amine + an aldehyde + H2O2. The enzyme catalyses a primary methyl amine + O2 + H2O = an aldehyde + H2O2 + NH4(+). The catalysed reaction is (R)-adrenaline + O2 + H2O = (R)-3,4-dihydroxymandelaldehyde + methylamine + H2O2. It carries out the reaction dopamine + O2 + H2O = 3,4-dihydroxyphenylacetaldehyde + H2O2 + NH4(+). It catalyses the reaction tyramine + O2 + H2O = (4-hydroxyphenyl)acetaldehyde + H2O2 + NH4(+). The enzyme catalyses (R)-noradrenaline + O2 + H2O = (R)-3,4-dihydroxymandelaldehyde + H2O2 + NH4(+). The catalysed reaction is serotonin + O2 + H2O = (5-hydroxyindol-3-yl)acetaldehyde + H2O2 + NH4(+). It carries out the reaction kynuramine + O2 + H2O = 3-(2-aminophenyl)-3-oxopropanal + H2O2 + NH4(+). It catalyses the reaction tryptamine + O2 + H2O = indole-3-acetaldehyde + H2O2 + NH4(+). The enzyme catalyses 2-phenylethylamine + O2 + H2O = 2-phenylacetaldehyde + H2O2 + NH4(+). Functionally, catalyzes the oxidative deamination of primary and some secondary amine such as neurotransmitters, with concomitant reduction of oxygen to hydrogen peroxide and has important functions in the metabolism of neuroactive and vasoactive amines in the central nervous system and peripheral tissues. Preferentially oxidizes serotonin. Also catalyzes the oxidative deamination of kynuramine to 3-(2-aminophenyl)-3-oxopropanal that can spontaneously condense to 4-hydroxyquinoline. In Equus caballus (Horse), this protein is Amine oxidase [flavin-containing] A.